Here is a 151-residue protein sequence, read N- to C-terminus: Putative pre-16S rRNA nuclease (151 aa).

The protein belongs to the YqgF nuclease family.

It localises to the cytoplasm. Functionally, could be a nuclease involved in processing of the 5'-end of pre-16S rRNA. This Methylococcus capsulatus (strain ATCC 33009 / NCIMB 11132 / Bath) protein is Putative pre-16S rRNA nuclease.